Here is a 398-residue protein sequence, read N- to C-terminus: 2-amino-3-ketobutyrate coenzyme A ligase (398 aa).

A pyridoxal 5'-phosphate-binding site is contributed by 111–112 (CF). H136 is a binding site for substrate. Residues S185, 210-213 (DDSH), 241-244 (TLGK), and 274-275 (SN) contribute to the pyridoxal 5'-phosphate site. K244 carries the post-translational modification N6-(pyridoxal phosphate)lysine. R368 is a binding site for substrate.

The protein belongs to the class-II pyridoxal-phosphate-dependent aminotransferase family. In terms of assembly, homodimer. Requires pyridoxal 5'-phosphate as cofactor.

It carries out the reaction glycine + acetyl-CoA = (2S)-2-amino-3-oxobutanoate + CoA. It participates in amino-acid degradation; L-threonine degradation via oxydo-reductase pathway; glycine from L-threonine: step 2/2. Functionally, catalyzes the cleavage of 2-amino-3-ketobutyrate to glycine and acetyl-CoA. The sequence is that of 2-amino-3-ketobutyrate coenzyme A ligase from Salmonella typhimurium (strain LT2 / SGSC1412 / ATCC 700720).